The sequence spans 314 residues: uncharacterized protein (314 aa).

The HTH araC/xylS-type domain occupies 192–289 (TEVKLHIKDN…GSSPGLFRSL (98 aa)). DNA-binding regions (H-T-H motif) lie at residues 209–230 (TDVA…AAEL) and 257–279 (IKEI…SAKI).

This is an uncharacterized protein from Bacillus subtilis (strain 168).